The sequence spans 579 residues: MTQQRRILITSALPYINGVKHLGNLAGSMLPADVYARVMRLQGHDVTYICATDEHGTPAELAAQATGQSVQAYCDEQYEVQRKAGEGFNLSFDWFGRTSRPANHTLTQHLAQQLEKNGLIEVRTSKQVYAVDDGRFLPDRYVEGTCPHCGYEKARGDQCDNCGRLLDPVDLINPYSAVSGSRNIEIRDTDHLYLLQTGMQDRIRDWVNAKGKNWPSLAVSIANKWLDEGLIARSISRDLSWGVKVTDADGNPRPGFENKVFYVWFDAPIGYISATQEWAEATGNDWEKLWLTDKGADQTEYVQFMGKDNVAFHTVSFPVTLLGSGEPWKTVDKLKAFNWVTWYGGKFSTSQKRGVFMDQALSLLPSDYWRWYLISNAPEGSDAAFTWEGFQAAVNSDLANVLGNFINRITKYCASKFEGKIPETGTSGDAEAWMANELAERLPRLIEFYEAMEFRKAAAETRAIWAAGNEYLTKAEPWVKYKNDVDGAAVGVRAGINLAAIFGIIAQPIIPDAAKKILDALGIPEENRKMPAGSKPEDFAALLDAIPRGHAISPPDVLFQKIEDSQVEEWTAQFGGGKE.

Positions 14–24 (PYINGVKHLGN) match the 'HIGH' region motif. Residues Cys-146, Cys-149, Cys-159, and Cys-162 each coordinate Zn(2+). The short motif at 346–350 (KFSTS) is the 'KMSKS' region element. ATP is bound at residue Thr-349.

Belongs to the class-I aminoacyl-tRNA synthetase family. MetG type 1 subfamily. Monomer. The cofactor is Zn(2+).

It localises to the cytoplasm. The catalysed reaction is tRNA(Met) + L-methionine + ATP = L-methionyl-tRNA(Met) + AMP + diphosphate. Its function is as follows. Is required not only for elongation of protein synthesis but also for the initiation of all mRNA translation through initiator tRNA(fMet) aminoacylation. The protein is Methionine--tRNA ligase of Hyphomonas neptunium (strain ATCC 15444).